The sequence spans 272 residues: Glutamate racemase (272 aa).

Substrate contacts are provided by residues Asp-9–Ser-10 and Tyr-41–Gly-42. Cys-73 acts as the Proton donor/acceptor in catalysis. Asn-74 to Thr-75 is a binding site for substrate. Cys-183 (proton donor/acceptor) is an active-site residue. Thr-184–His-185 is a binding site for substrate.

It belongs to the aspartate/glutamate racemases family.

It catalyses the reaction L-glutamate = D-glutamate. The protein operates within cell wall biogenesis; peptidoglycan biosynthesis. In terms of biological role, provides the (R)-glutamate required for cell wall biosynthesis. This is Glutamate racemase from Shewanella sp. (strain MR-4).